The following is a 605-amino-acid chain: Formin-binding protein 1-like (605 aa).

Residues 1-263 (MSWGTELWDQ…AAKSVDERRD (263 aa)) form the F-BAR domain. The stretch at 66–258 (FTSCVAFFNI…EGMILAAKSV (193 aa)) forms a coiled coil. The tract at residues 245 to 535 (SKCLEGMILA…EFDDEFEDDD (291 aa)) is interaction with CDC42. Ser-295 carries the phosphoserine modification. Residues 392–484 (LEDFSHLPPE…VEGKTGGRGD (93 aa)) adopt a coiled-coil conformation. The REM-1 domain maps to 397 to 474 (HLPPEQRRKK…IHKNEAWLSE (78 aa)). Residues 476-490 (EGKTGGRGDRRHSSD) are compositionally biased toward basic and acidic residues. The disordered stretch occupies residues 476–539 (EGKTGGRGDR…EFEDDDPLPA (64 aa)). Phosphoserine occurs at positions 488, 501, and 505. The tract at residues 522–605 (GHHNEFDDEF…VTLEKNSKGS (84 aa)) is interaction with DNM1. Positions 527–536 (FDDEFEDDDP) are enriched in acidic residues. Residues 538–599 (PAIGHCKAIY…PTSYIDVTLE (62 aa)) enclose the SH3 domain. The tract at residues 541 to 597 (GHCKAIYPFDGHNEGTLAMKEGEVLYIIEEDKGDGWTRARRQNGEEGYVPTSYIDVT) is interaction with DNM2 and WASL. An interaction with DAAM1, DIAPH1 and DIAPH2 region spans residues 541 to 605 (GHCKAIYPFD…VTLEKNSKGS (65 aa)).

The protein belongs to the FNBP1 family. In terms of assembly, homodimerizes, the dimers can polymerize end-to-end to form filamentous structures. Interacts with GTP-bound CDC42. Interacts with DAAM1, DIAPH1, DIAPH2, DNM1, DNM2 and WASL/N-WASP. Interacts with ATG3. Interacts (via SH3 domain) with ABI1, WASF2, CDC42 and WIPF1.

It is found in the cytoplasm. The protein localises to the cytoskeleton. Its subcellular location is the cell cortex. The protein resides in the cytoplasmic vesicle. It localises to the cell membrane. Functionally, required to coordinate membrane tubulation with reorganization of the actin cytoskeleton during endocytosis. May bind to lipids such as phosphatidylinositol 4,5-bisphosphate and phosphatidylserine and promote membrane invagination and the formation of tubules. Also promotes CDC42-induced actin polymerization by activating the WASL/N-WASP-WASPIP/WIP complex, the predominant form of WASL/N-WASP in cells. Actin polymerization may promote the fission of membrane tubules to form endocytic vesicles. Essential for autophagy of intracellular bacterial pathogens. This chain is Formin-binding protein 1-like (FNBP1L), found in Homo sapiens (Human).